Reading from the N-terminus, the 431-residue chain is Adenylosuccinate synthetase (431 aa).

GTP contacts are provided by residues 13–19 (GDEGKGK) and 41–43 (GHT). Asp14 (proton acceptor) is an active-site residue. Mg(2+)-binding residues include Asp14 and Gly41. IMP is bound by residues 14 to 17 (DEGK), 39 to 42 (NAGH), Thr130, Arg144, Gln225, Thr240, and Arg304. The active-site Proton donor is His42. 300 to 306 (ATTGRKR) serves as a coordination point for substrate. GTP contacts are provided by residues Arg306, 332–334 (KLD), and 415–417 (STG).

The protein belongs to the adenylosuccinate synthetase family. In terms of assembly, homodimer. It depends on Mg(2+) as a cofactor.

Its subcellular location is the cytoplasm. It catalyses the reaction IMP + L-aspartate + GTP = N(6)-(1,2-dicarboxyethyl)-AMP + GDP + phosphate + 2 H(+). It participates in purine metabolism; AMP biosynthesis via de novo pathway; AMP from IMP: step 1/2. Plays an important role in the de novo pathway of purine nucleotide biosynthesis. Catalyzes the first committed step in the biosynthesis of AMP from IMP. In Shewanella oneidensis (strain ATCC 700550 / JCM 31522 / CIP 106686 / LMG 19005 / NCIMB 14063 / MR-1), this protein is Adenylosuccinate synthetase.